A 678-amino-acid polypeptide reads, in one-letter code: DNA ligase (678 aa).

Residues 36 to 40 (DSEFD), 85 to 86 (SL), and Glu117 each bind NAD(+). The active-site N6-AMP-lysine intermediate is Lys119. NAD(+) contacts are provided by Arg140, Glu177, Lys294, and Lys318. 4 residues coordinate Zn(2+): Cys412, Cys415, Cys430, and Cys436. A BRCT domain is found at 595–678 (IIDAPLLGKT…TWWQHYGNAV (84 aa)).

The protein belongs to the NAD-dependent DNA ligase family. LigA subfamily. Mg(2+) serves as cofactor. Mn(2+) is required as a cofactor.

It catalyses the reaction NAD(+) + (deoxyribonucleotide)n-3'-hydroxyl + 5'-phospho-(deoxyribonucleotide)m = (deoxyribonucleotide)n+m + AMP + beta-nicotinamide D-nucleotide.. In terms of biological role, DNA ligase that catalyzes the formation of phosphodiester linkages between 5'-phosphoryl and 3'-hydroxyl groups in double-stranded DNA using NAD as a coenzyme and as the energy source for the reaction. It is essential for DNA replication and repair of damaged DNA. This Dichelobacter nodosus (strain VCS1703A) protein is DNA ligase.